Reading from the N-terminus, the 103-residue chain is uncharacterized protein (103 aa).

The EthD domain maps to 12–88 (ADPAAFDEHY…AAADVANFAS (77 aa)).

This is an uncharacterized protein from Rhodococcus erythropolis (Arthrobacter picolinophilus).